We begin with the raw amino-acid sequence, 287 residues long: UPF0725 protein At1g19060 (287 aa).

The protein belongs to the UPF0725 (EMB2204) family.

The polypeptide is UPF0725 protein At1g19060 (Arabidopsis thaliana (Mouse-ear cress)).